The sequence spans 585 residues: Pre-mRNA-splicing factor sap145 (585 aa).

Residues 1–74 (MAEIQTAQNP…NNDNLYNDKK (74 aa)) are a coiled coil. The tract at residues 1–84 (MAEIQTAQNP…SNGNFYDTNK (84 aa)) is disordered. Over residues 12-22 (KELEKILERNN) the composition is skewed to basic and acidic residues. The segment covering 23-41 (KQKNKKSRNQVRREKKKLL) has biased composition (basic residues). Residues 51 to 62 (LAEKNSDDKDQL) are compositionally biased toward basic and acidic residues. Serine 145 carries the post-translational modification Phosphoserine. Positions 400–460 (IHAGTGSPVS…SASEPRSQRE (61 aa)) are disordered. Over residues 416–439 (LEEFEEEESSEEEESEDVEYPTEE) the composition is skewed to acidic residues.

In terms of assembly, belongs to the 40S cdc5-associated complex (or cwf complex), a spliceosome sub-complex reminiscent of a late-stage spliceosome composed of the U2, U5 and U6 snRNAs and at least brr2, cdc5, cwf2/prp3, cwf3/syf1, cwf4/syf3, cwf5/ecm2, spp42/cwf6, cwf7/spf27, cwf8, cwf9, cwf10, cwf11, cwf12, prp45/cwf13, cwf14, cwf15, cwf16, cwf17, cwf18, cwf19, cwf20, cwf21, cwf22, cwf23, cwf24, cwf25, cwf26, cyp7/cwf27, cwf28, cwf29/ist3, lea1, msl1, prp5/cwf1, prp10/sap155, prp12/sap130, prp17, prp22, sap61, sap62, sap114, sap145, slu7, smb1, smd1, smd3, smf1, smg1 and syf2. Sap145 is part of the SF3b subcomplex of the Prp19-associated nineteen complex (NTC), composed of ini1, prp10, prp12/sap130, sap10/sap155, sap14, sap49 and sap145. Part of the U2 snRNP.

The protein resides in the nucleus. It is found in the cytoplasm. Functionally, involved in pre-mRNA splicing. May be involved in endoplasmic reticulum-associated protein degradation (ERAD) and required for growth at low and high temperatures. The protein is Pre-mRNA-splicing factor sap145 (sap145) of Schizosaccharomyces pombe (strain 972 / ATCC 24843) (Fission yeast).